The primary structure comprises 251 residues: 5'-nucleotidase SurE (251 aa).

Residues D8, D9, S40, and N95 each coordinate a divalent metal cation.

The protein belongs to the SurE nucleotidase family. A divalent metal cation is required as a cofactor.

Its subcellular location is the cytoplasm. The catalysed reaction is a ribonucleoside 5'-phosphate + H2O = a ribonucleoside + phosphate. Its function is as follows. Nucleotidase that shows phosphatase activity on nucleoside 5'-monophosphates. This chain is 5'-nucleotidase SurE, found in Lawsonia intracellularis (strain PHE/MN1-00).